We begin with the raw amino-acid sequence, 445 residues long: Tubulin beta-2 chain (445 aa).

Positions 1-4 match the MREI motif motif; the sequence is MREI. GTP-binding residues include Q11, E69, S138, G142, T143, G144, N204, and N226. E69 serves as a coordination point for Mg(2+). A disordered region spans residues 424–445; that stretch reads QYQDATADEQGEFEEEGEEDEA. Residues 429–445 show a composition bias toward acidic residues; it reads TADEQGEFEEEGEEDEA. The residue at position 438 (E438) is a 5-glutamyl polyglutamate.

This sequence belongs to the tubulin family. In terms of assembly, dimer of alpha and beta chains. A typical microtubule is a hollow water-filled tube with an outer diameter of 25 nm and an inner diameter of 15 nM. Alpha-beta heterodimers associate head-to-tail to form protofilaments running lengthwise along the microtubule wall with the beta-tubulin subunit facing the microtubule plus end conferring a structural polarity. Microtubules usually have 13 protofilaments but different protofilament numbers can be found in some organisms and specialized cells. Mg(2+) is required as a cofactor. Post-translationally, some glutamate residues at the C-terminus are polyglycylated, resulting in polyglycine chains on the gamma-carboxyl group. Glycylation is mainly limited to tubulin incorporated into axonemes (cilia and flagella) whereas glutamylation is prevalent in neuronal cells, centrioles, axonemes, and the mitotic spindle. Both modifications can coexist on the same protein on adjacent residues, and lowering polyglycylation levels increases polyglutamylation, and reciprocally. The precise function of polyglycylation is still unclear. Some glutamate residues at the C-terminus are polyglutamylated, resulting in polyglutamate chains on the gamma-carboxyl group. Polyglutamylation plays a key role in microtubule severing by spastin (SPAST). SPAST preferentially recognizes and acts on microtubules decorated with short polyglutamate tails: severing activity by SPAST increases as the number of glutamates per tubulin rises from one to eight, but decreases beyond this glutamylation threshold. In terms of tissue distribution, highly expressed in neuronal cells.

It is found in the cytoplasm. It localises to the cytoskeleton. Its function is as follows. Tubulin is the major constituent of microtubules, a cylinder consisting of laterally associated linear protofilaments composed of alpha- and beta-tubulin heterodimers. Microtubules grow by the addition of GTP-tubulin dimers to the microtubule end, where a stabilizing cap forms. Below the cap, tubulin dimers are in GDP-bound state, owing to GTPase activity of alpha-tubulin. The sequence is that of Tubulin beta-2 chain from Gallus gallus (Chicken).